A 480-amino-acid chain; its full sequence is Glycogen synthase (480 aa).

Lysine 15 provides a ligand contact to ADP-alpha-D-glucose.

Belongs to the glycosyltransferase 1 family. Bacterial/plant glycogen synthase subfamily.

The catalysed reaction is [(1-&gt;4)-alpha-D-glucosyl](n) + ADP-alpha-D-glucose = [(1-&gt;4)-alpha-D-glucosyl](n+1) + ADP + H(+). The protein operates within glycan biosynthesis; glycogen biosynthesis. Its function is as follows. Synthesizes alpha-1,4-glucan chains using ADP-glucose. The chain is Glycogen synthase from Rhizobium leguminosarum bv. trifolii (strain WSM2304).